Here is a 179-residue protein sequence, read N- to C-terminus: uncharacterized protein (179 aa).

Residues 1 to 27 constitute a signal peptide (or 24); sequence MKTISKQLSAVIFPFIFSACVSQSASS.

This is an uncharacterized protein from Haemophilus influenzae (strain ATCC 51907 / DSM 11121 / KW20 / Rd).